Consider the following 154-residue polypeptide: Myoglobin (154 aa).

Residues Gly2–Lys148 form the Globin domain. The residue at position 4 (Ser4) is a Phosphoserine. His65 contacts nitrite. O2 is bound at residue His65. At Thr68 the chain carries Phosphothreonine. His94 serves as a coordination point for heme b.

The protein belongs to the globin family. Monomeric.

It localises to the cytoplasm. Its subcellular location is the sarcoplasm. It catalyses the reaction Fe(III)-heme b-[protein] + nitric oxide + H2O = Fe(II)-heme b-[protein] + nitrite + 2 H(+). The catalysed reaction is H2O2 + AH2 = A + 2 H2O. In terms of biological role, monomeric heme protein which primary function is to store oxygen and facilitate its diffusion within muscle tissues. Reversibly binds oxygen through a pentacoordinated heme iron and enables its timely and efficient release as needed during periods of heightened demand. Depending on the oxidative conditions of tissues and cells, and in addition to its ability to bind oxygen, it also has a nitrite reductase activity whereby it regulates the production of bioactive nitric oxide. Under stress conditions, like hypoxia and anoxia, it also protects cells against reactive oxygen species thanks to its pseudoperoxidase activity. This is Myoglobin (MB) from Sapajus apella (Brown-capped capuchin).